The chain runs to 84 residues: Small ribosomal subunit protein uS17 (84 aa).

The protein belongs to the universal ribosomal protein uS17 family. As to quaternary structure, part of the 30S ribosomal subunit.

One of the primary rRNA binding proteins, it binds specifically to the 5'-end of 16S ribosomal RNA. The sequence is that of Small ribosomal subunit protein uS17 from Erwinia tasmaniensis (strain DSM 17950 / CFBP 7177 / CIP 109463 / NCPPB 4357 / Et1/99).